A 375-amino-acid polypeptide reads, in one-letter code: Succinyl-diaminopimelate desuccinylase (375 aa).

His66 contacts Zn(2+). Asp68 is a catalytic residue. Asp99 contacts Zn(2+). Glu133 acts as the Proton acceptor in catalysis. Positions 134, 162, and 348 each coordinate Zn(2+).

Belongs to the peptidase M20A family. DapE subfamily. In terms of assembly, homodimer. Zn(2+) serves as cofactor. The cofactor is Co(2+).

It carries out the reaction N-succinyl-(2S,6S)-2,6-diaminopimelate + H2O = (2S,6S)-2,6-diaminopimelate + succinate. Its pathway is amino-acid biosynthesis; L-lysine biosynthesis via DAP pathway; LL-2,6-diaminopimelate from (S)-tetrahydrodipicolinate (succinylase route): step 3/3. In terms of biological role, catalyzes the hydrolysis of N-succinyl-L,L-diaminopimelic acid (SDAP), forming succinate and LL-2,6-diaminopimelate (DAP), an intermediate involved in the bacterial biosynthesis of lysine and meso-diaminopimelic acid, an essential component of bacterial cell walls. The sequence is that of Succinyl-diaminopimelate desuccinylase from Escherichia coli O139:H28 (strain E24377A / ETEC).